Reading from the N-terminus, the 150-residue chain is D-galactose-binding lectin (150 aa).

D-galactose contacts are provided by His16 and Gly19. An N-linked (GlcNAc...) asparagine glycan is attached at Asn26. D-galactose contacts are provided by residues 35-37, His64, and Gly67; that span reads DIH. Residue Asn74 is glycosylated (N-linked (GlcNAc...) asparagine). D-galactose contacts are provided by residues 83-85, His108, and Gly111; that span reads DRH. Asn118 carries an N-linked (GlcNAc...) asparagine glycan. 127–129 contacts D-galactose; it reads DEH.

Oligomerizes in solution. In terms of processing, the N-terminus is blocked. As to expression, expressed in mantle. Expressed 51 and 1.6 fold in mantle and gonads, respectively, relative to that in hemocytes. Expressed at a much lower level in other tissues tested including gill, muscle and hepatopancreas.

With respect to regulation, hemagglutinating activity does not require Ca(2+) ions. Hemagglutinating activity is inhibited by porcine stomach mucin (PSM), bovine submaxillary mucin (BSM) and fetuin. Agglutination of V.proteolyticus bacteria is inhibited by D-galactose, but not by D-glucose. Fungal binding is inhibited by D-galactose, but not by pathogen-associated molecular patterns (PAMPs) including lipopolysaccharide (LPS), peptidoglycan and beta-glucan. In terms of biological role, D-galactose-binding lectin. Binds both alpha and beta anomer of galactose (Gal). Binds strongly to branched beta-Gal-terminated glycans and weakly to unbranched glycans with alpha-Gal on the end of chains. Has strong affinity for both Gal and GalNAc. Binds glycoproteins containing mucin-type chains. Has hemagglutinating activity towards human group A erythrocytes. Has hemagglutinating activity towards rabbit erythrocytes. Agglutinates V.proteolyticus bacteria. Binds strongly to fungi including species from genera Aspergillus, Alternaria, Fusarium and Haematonectria, and to a lesser extent to fungi from genera Trichoderma. Decreases conidia germination and hyphal growth of fungi. At high concentration, stimulates secretion of cytokines TNF-alpha and IFN-gamma from human peripheral blood cells, and at low concentration reduces hyperexpression of cytokine IL-10 in these cells, indicative of immunomodulatory capability. However, has no effect on IL-4 production. Recognizes pathogen-associated molecular patterns (PAMPs) and binds to peptidoglycan from S.aureus, but has only little binding to beta-1,3-glucan from E.gracilis and lipopolysaccharide (LPS) from E.coli. May be involved in innate immunity acting as an antibacterial or antifungal agent recognizing carbohydrate ligands on the surface of pathogens. This is D-galactose-binding lectin from Mytilus trossulus (Blue mussel).